Here is a 542-residue protein sequence, read N- to C-terminus: CTP synthase (542 aa).

Positions 1 to 265 are amidoligase domain; the sequence is MTRYVFITGG…DREILAHFQM (265 aa). A CTP-binding site is contributed by S13. S13 serves as a coordination point for UTP. ATP is bound by residues 14–19 and D71; that span reads SLGKGL. Mg(2+) contacts are provided by D71 and E139. CTP is bound by residues 146–148, 186–191, and K222; these read DIE and KTKPTQ. Residues 186–191 and K222 contribute to the UTP site; that span reads KTKPTQ. 238-240 is an ATP binding site; it reads RDV. In terms of domain architecture, Glutamine amidotransferase type-1 spans 291 to 541; that stretch reads TIAIVGKYTG…IAAAIDQSRL (251 aa). An L-glutamine-binding site is contributed by G353. C380 serves as the catalytic Nucleophile; for glutamine hydrolysis. L-glutamine contacts are provided by residues 381 to 384, E404, and R469; that span reads FGMQ. Residues H514 and E516 contribute to the active site.

This sequence belongs to the CTP synthase family. As to quaternary structure, homotetramer.

It catalyses the reaction UTP + L-glutamine + ATP + H2O = CTP + L-glutamate + ADP + phosphate + 2 H(+). The catalysed reaction is L-glutamine + H2O = L-glutamate + NH4(+). The enzyme catalyses UTP + NH4(+) + ATP = CTP + ADP + phosphate + 2 H(+). It participates in pyrimidine metabolism; CTP biosynthesis via de novo pathway; CTP from UDP: step 2/2. Allosterically activated by GTP, when glutamine is the substrate; GTP has no effect on the reaction when ammonia is the substrate. The allosteric effector GTP functions by stabilizing the protein conformation that binds the tetrahedral intermediate(s) formed during glutamine hydrolysis. Inhibited by the product CTP, via allosteric rather than competitive inhibition. Functionally, catalyzes the ATP-dependent amination of UTP to CTP with either L-glutamine or ammonia as the source of nitrogen. Regulates intracellular CTP levels through interactions with the four ribonucleotide triphosphates. This chain is CTP synthase, found in Methylorubrum extorquens (strain CM4 / NCIMB 13688) (Methylobacterium extorquens).